The chain runs to 430 residues: Tyrosine--tRNA ligase (430 aa).

Tyr32 is an L-tyrosine binding site. The 'HIGH' region motif lies at 37–46; sequence PTADSLHIGH. Residues Tyr172 and Gln176 each coordinate L-tyrosine. Positions 232 to 236 match the 'KMSKS' region motif; that stretch reads KFGKT. Residue Lys235 participates in ATP binding. Residues 362-429 form the S4 RNA-binding domain; the sequence is VKAVDLFVDN…GKKNYFLLIA (68 aa).

The protein belongs to the class-I aminoacyl-tRNA synthetase family. TyrS type 1 subfamily. Homodimer.

It localises to the cytoplasm. It catalyses the reaction tRNA(Tyr) + L-tyrosine + ATP = L-tyrosyl-tRNA(Tyr) + AMP + diphosphate + H(+). In terms of biological role, catalyzes the attachment of tyrosine to tRNA(Tyr) in a two-step reaction: tyrosine is first activated by ATP to form Tyr-AMP and then transferred to the acceptor end of tRNA(Tyr). The chain is Tyrosine--tRNA ligase from Bacteroides thetaiotaomicron (strain ATCC 29148 / DSM 2079 / JCM 5827 / CCUG 10774 / NCTC 10582 / VPI-5482 / E50).